The following is a 454-amino-acid chain: Maintenance of mitochondrial morphology protein 1 (454 aa).

At 1 to 117 (MESNYTGMDG…SFSSWSFAQG (117 aa)) the chain is on the lumenal side. Residues 118–138 (LIVGQVSVVLVLIFFIKFFIF) form a helical membrane-spanning segment. The Cytoplasmic segment spans residues 139 to 454 (SDSSTKTNPN…ESEPGRETHY (316 aa)). A disordered region spans residues 144 to 164 (KTNPNPAKNSSSTNSLSGLSS). Low complexity predominate over residues 153 to 164 (SSSTNSLSGLSS). Residues 215–427 (PAESLDWFNV…EPRFQFIKLP (213 aa)) enclose the SMP-LTD domain. Residues Arg253, Trp411, Arg415, Trp430, Arg432, and Ser433 each coordinate a 1,2-diacyl-sn-glycero-3-phosphate. Positions 434 to 454 (KNTREGKADVDESEPGRETHY) are disordered. Residues 435-454 (NTREGKADVDESEPGRETHY) are compositionally biased toward basic and acidic residues.

It belongs to the MMM1 family. As to quaternary structure, homodimer. Component of the ER-mitochondria encounter structure (ERMES) or MDM complex, composed of MMM1, MDM10, MDM12 and MDM34. An MMM1 homodimer associates with one molecule of MDM12 on each side in a pairwise head-to-tail manner, and the SMP-LTD domains of MMM1 and MDM12 generate a continuous hydrophobic tunnel for phospholipid trafficking.

It is found in the endoplasmic reticulum membrane. Functionally, component of the ERMES/MDM complex, which serves as a molecular tether to connect the endoplasmic reticulum (ER) and mitochondria. Components of this complex are involved in the control of mitochondrial shape and protein biogenesis, and function in nonvesicular lipid trafficking between the ER and mitochondria. Preferentially binds to glycerophospholipids such as phosphatidylcholoine (PC), phosphatidic acid (PA), phosphatidylglycerol (PG), and phosphatidylserine (PS), but not to phosphatidylethanolamine (PE). The MDM12-MMM1 subcomplex functions in the major beta-barrel assembly pathway that is responsible for biogenesis of all outer membrane beta-barrel proteins, and acts in a late step after the SAM complex. The MDM10-MDM12-MMM1 subcomplex further acts in the TOM40-specific pathway after the action of the MDM12-MMM1 complex. Essential for establishing and maintaining the structure of mitochondria and maintenance of mtDNA nucleoids. In Zygosaccharomyces rouxii (strain ATCC 2623 / CBS 732 / NBRC 1130 / NCYC 568 / NRRL Y-229), this protein is Maintenance of mitochondrial morphology protein 1.